The chain runs to 137 residues: Cytochrome c-type biogenesis protein CcmE (137 aa).

Topologically, residues 1–8 (MQKGAKNR) are cytoplasmic. The chain crosses the membrane as a helical; Signal-anchor for type II membrane protein span at residues 9-29 (LITIIICFCSAVIGVSIILYN). Residues 30–137 (LEKSIVFFVP…NTVIPAKAGI (108 aa)) are Periplasmic-facing. Positions 120 and 124 each coordinate heme.

This sequence belongs to the CcmE/CycJ family.

It localises to the cell inner membrane. Functionally, heme chaperone required for the biogenesis of c-type cytochromes. Transiently binds heme delivered by CcmC and transfers the heme to apo-cytochromes in a process facilitated by CcmF and CcmH. This Rickettsia bellii (strain OSU 85-389) protein is Cytochrome c-type biogenesis protein CcmE.